The chain runs to 558 residues: ATP-dependent RNA helicase ROK1 (558 aa).

Positions 26–91 (PSAKQQQYEQ…EEAPPLEIQT (66 aa)) are disordered. 2 stretches are compositionally biased toward basic and acidic residues: residues 34 to 53 (EQHK…DFFH) and 64 to 81 (DSTD…KKED). The Q motif signature appears at 120-148 (DMIGRFRLDSKLLSNLLEAEFVEPTAIQC). A Helicase ATP-binding domain is found at 151–329 (LPISLSGRDL…HSIMRDPIRV (179 aa)). ATP is bound at residue 164–171 (APTGSGKT). Residues 276–279 (DEAD) carry the DEAD box motif. The 165-residue stretch at 340–504 (TIDQKLVFTG…GFSGWMENMT (165 aa)) folds into the Helicase C-terminal domain. The segment at 509–558 (NEKKKVKHKEIDRKDISTVPKLVKHKRKQREQMIEASKKRKQEETRNALQ) is disordered. Residues 538–558 (REQMIEASKKRKQEETRNALQ) are compositionally biased toward basic and acidic residues.

It belongs to the DEAD box helicase family. DDX52/ROK1 subfamily. In terms of assembly, interacts with the U3 snoRNA and is associated with the 90S and 40S pre-ribosomes.

Its subcellular location is the nucleus. It localises to the nucleolus. It carries out the reaction ATP + H2O = ADP + phosphate + H(+). In terms of biological role, ATP-dependent RNA helicase involved in 40S ribosomal subunit biogenesis. Required for the processing and cleavage of 35S pre-rRNA at sites A0, A1, and A2, leading to mature 18S rRNA. In Scheffersomyces stipitis (strain ATCC 58785 / CBS 6054 / NBRC 10063 / NRRL Y-11545) (Yeast), this protein is ATP-dependent RNA helicase ROK1 (ROK1).